The following is a 201-amino-acid chain: Holliday junction branch migration complex subunit RuvA (201 aa).

Positions 1–63 (MYDYIKGIVK…EDNISLFGFQ (63 aa)) are domain I. A domain II region spans residues 64–142 (STEERYLFKK…DVVASEIVYK (79 aa)). The tract at residues 143 to 153 (AAENDIVTGLS) is flexible linker. The domain III stretch occupies residues 153 to 201 (SPQLEEAVLALEALGYSTRELKKVIPKMAKENDLTSDAYIKLALRLMTK).

Belongs to the RuvA family. In terms of assembly, homotetramer. Forms an RuvA(8)-RuvB(12)-Holliday junction (HJ) complex. HJ DNA is sandwiched between 2 RuvA tetramers; dsDNA enters through RuvA and exits via RuvB. An RuvB hexamer assembles on each DNA strand where it exits the tetramer. Each RuvB hexamer is contacted by two RuvA subunits (via domain III) on 2 adjacent RuvB subunits; this complex drives branch migration. In the full resolvosome a probable DNA-RuvA(4)-RuvB(12)-RuvC(2) complex forms which resolves the HJ.

The protein localises to the cytoplasm. Its function is as follows. The RuvA-RuvB-RuvC complex processes Holliday junction (HJ) DNA during genetic recombination and DNA repair, while the RuvA-RuvB complex plays an important role in the rescue of blocked DNA replication forks via replication fork reversal (RFR). RuvA specifically binds to HJ cruciform DNA, conferring on it an open structure. The RuvB hexamer acts as an ATP-dependent pump, pulling dsDNA into and through the RuvAB complex. HJ branch migration allows RuvC to scan DNA until it finds its consensus sequence, where it cleaves and resolves the cruciform DNA. This chain is Holliday junction branch migration complex subunit RuvA, found in Listeria innocua serovar 6a (strain ATCC BAA-680 / CLIP 11262).